Reading from the N-terminus, the 374-residue chain is Chaperone protein DnaJ (374 aa).

A J domain is found at Asp-4–Gly-68. The segment at Gly-133 to Thr-215 adopts a CR-type zinc-finger fold. 8 residues coordinate Zn(2+): Cys-146, Cys-149, Cys-163, Cys-166, Cys-189, Cys-192, Cys-203, and Cys-206. CXXCXGXG motif repeat units follow at residues Cys-146–Gly-153, Cys-163–Gly-170, Cys-189–Gly-196, and Cys-203–Gly-210.

This sequence belongs to the DnaJ family. As to quaternary structure, homodimer. Zn(2+) serves as cofactor.

It is found in the cytoplasm. In terms of biological role, participates actively in the response to hyperosmotic and heat shock by preventing the aggregation of stress-denatured proteins and by disaggregating proteins, also in an autonomous, DnaK-independent fashion. Unfolded proteins bind initially to DnaJ; upon interaction with the DnaJ-bound protein, DnaK hydrolyzes its bound ATP, resulting in the formation of a stable complex. GrpE releases ADP from DnaK; ATP binding to DnaK triggers the release of the substrate protein, thus completing the reaction cycle. Several rounds of ATP-dependent interactions between DnaJ, DnaK and GrpE are required for fully efficient folding. Also involved, together with DnaK and GrpE, in the DNA replication of plasmids through activation of initiation proteins. The chain is Chaperone protein DnaJ from Microcystis aeruginosa (strain NIES-843 / IAM M-2473).